Consider the following 621-residue polypeptide: Lamin-C (621 aa).

Residues 1 to 47 (MSARRVTLNTRVSRASTSTPVGGASTSSRVGATSPTSPTRTSRQQEK) form a disordered region. Positions 1–47 (MSARRVTLNTRVSRASTSTPVGGASTSSRVGATSPTSPTRTSRQQEK) are head. The segment covering 7–31 (TLNTRVSRASTSTPVGGASTSSRVG) has biased composition (polar residues). Residues 33–42 (TSPTSPTRTS) show a composition bias toward low complexity. Residue serine 34 is modified to Phosphoserine. Residues 46–402 (EKEELQHLND…KLLCGEERRL (357 aa)) enclose the IF rod domain. The segment at 47–85 (KEELQHLNDRLACYIDRMRNLENENSRLTQELNLAQDTV) is coil 1A. Positions 86 to 95 (NRETSNLKAV) are linker 1. A coil 1B region spans residues 96–233 (YEKELAAARK…QVHTQELTET (138 aa)). A linker 2 region spans residues 234–257 (RSRRQIEISEIDGRLSRQYEAKLQ). The interval 258-403 (QSLQELRDQY…LLCGEERRLN (146 aa)) is coil 2. The interval 404–458 (IESPGRPTTDSGISSNGSHLTASASSRSGRVTPSGRRSATPGISGSSAVKRRRTV) is disordered. The segment at 404–621 (IESPGRPTTD…GVRSLFSLLF (218 aa)) is tail. Phosphoserine is present on residues serine 406 and serine 441. Polar residues predominate over residues 409-450 (RPTTDSGISSNGSHLTASASSRSGRVTPSGRRSATPGISGSS). Threonine 443 carries the phosphothreonine modification. The Nuclear localization signal signature appears at 453–458 (KRRRTV). The 115-residue stretch at 468-582 (SEYSVNAAAK…EDVASYDRVR (115 aa)) folds into the LTD domain. The disordered stretch occupies residues 585–605 (VSSHTSRHRSSGTPSTGFTLG).

It belongs to the intermediate filament family. Interacts with MAN1. First detected from late stage 12 in the oenocytes, abdominal segments, hindgut and posterior spiracles, with expression increasing in stage 13 (at protein level). In stage 14, also becomes detectable in the foregut (at protein level). Stage 15 shows expression in the epidermis, dorsal longitudinal trunk, pharynx, esophagus and proventriculus, with the dorsal pharyngeal musculature showing expression in late stage 15 (at protein level). In stage 16 embryos, also detected in the exit glia with increasing expression in the somatic musculature (at protein level). Also detected in the visceral mesoderm but not in the midgut or central nervous system until the end of embryogenesis (at protein level). In third instar larvae, detectable at varying levels in all cell types (at protein level). Expressed in spermatocytes (at protein level).

It localises to the nucleus. The protein resides in the nucleus lamina. Functionally, lamins are components of the nuclear lamina, a fibrous layer on the nucleoplasmic side of the inner nuclear membrane, which is thought to provide a framework for the nuclear envelope and may also interact with chromatin. In spermatocytes, regulates cytokinesis during meiosis. This is Lamin-C (LamC) from Drosophila melanogaster (Fruit fly).